A 1203-amino-acid polypeptide reads, in one-letter code: MYLKSLTLKGFKSFASPTTLRFEPGITAVVGPNGSGKSNVVDALAWVMGEQGAKTLRGSKMEDVIFAGTLSRAPLGRAEVTLIIDNSDNVLPIEYSEVSITRRMFRDGASEYEINGSSCRLMDVQELLSDSGIGREMHVIVGQGKLDQILQSRPEDRRTFIEEAAGILKYRRRKEKALRKLDAMSANLARLTDLTTELRRQLKPLSRQAEVARRAATIQADLRDARLRLAADDLVSRQGQRDAIVEAETMMRRDHDEAAARLAVASEELAAHEAALTELSGRAESVQQIWFGLSTLVERVSATIRIAGERAYHLDVDPATPSDTDPDVLEAEAQQMEVAEQQLLAELAVARTQLEAARAELADRERHAVEADKAHLEAVRAEADRREGLALLAGQVETMRARIESIDDSVARLSERIEEVTARTQQILAEFETVQGRVGELDQSEVHLDEQHERAVAALRFANERVAELQSAERDAERQVVSLRARIDALTMGLERKDGAAWLARNYSDTGLLGSIAKLVKVRPGYEAALAAVLGPAADALAVDSLGAARSALTALKEADAGRATLVLADWLADAGPACVTGLPDGAQRALDLIEAPPWLQGALIAMLYGVVVVNYLAEALGVVDICPQLRVVTVDGDLVGAGWVSGGSGRRLSTLEVTSEIDKAGAELAAAEAHMAQLNAALSGALSEQVAHSDATEQALVALNESDTAILSMYDQLGRLGQEVRAAEAEWESLLAQREELEARRVSILEEVVELETRLHNVEQIQHVHALDENSAAARQLIVAAAEEARGVEVEALLAVRTAEERVNAVCGRANSLRRAAAAEREVRLRDQQAHAARIRAAAVAAAVTDCGQLLASRLTQAVDLAARHRDALATERQQRSVAIAAVRYEVNTLRVRLATLTDSLHRDEVANVQAALRIEQLEQLVLEQFGIAPVDLIAEYGPQVALLPTELEMAEFQQARERGEQVTSPAPMPYDRATQERRAKRAERELAELGRVNPLALEEFAALEERYNFLSTQLEDVKGARKDLLDVVAEVDARILQVFSDAFVDVEREFRGVFTSLFPGGEGRLRLTDPDDMLTTGIEVEARPSGKKVSRLSLLSGGEKSLIAVAMLVAIFKARPSPFYIMDEVEAALDDVNLCRLIGVFEQLRGQSQLIIITHQKPTMEVADTLYGVTMQGDGITAVISQRMRGQQVESLVTSSS.

32–39 provides a ligand contact to ATP; the sequence is PNGSGKSN. 3 coiled-coil regions span residues 167-203, 250-288, and 327-497; these read ILKY…RQLK, MMRR…SVQQ, and DVLE…LERK. Residues 511–622 form the SMC hinge domain; that stretch reads GLLGSIAKLV…VVNYLAEALG (112 aa). Coiled-coil stretches lie at residues 657–689, 720–765, and 976–1030; these read EVTS…ALSE, RLGQ…NVEQ, and YDRA…RKDL.

It belongs to the SMC family. Homodimer.

Its subcellular location is the cytoplasm. Its function is as follows. Required for chromosome condensation and partitioning. This Mycobacterium leprae (strain TN) protein is Chromosome partition protein Smc.